A 382-amino-acid polypeptide reads, in one-letter code: GDP-mannose 4,6 dehydratase 2 (382 aa).

Residues 40–45 (GITGQD), 97–98 (DM), 119–123 (LAAQS), and Y134 each bind NADP(+). The active site involves T166. Catalysis depends on nucleophile residues E168 and Y190. NADP(+)-binding residues include K194, H220, and R225.

It belongs to the NAD(P)-dependent epimerase/dehydratase family. GDP-mannose 4,6-dehydratase subfamily. The cofactor is NADP(+).

It carries out the reaction GDP-alpha-D-mannose = GDP-4-dehydro-alpha-D-rhamnose + H2O. It participates in nucleotide-sugar biosynthesis; GDP-L-fucose biosynthesis via de novo pathway; GDP-L-fucose from GDP-alpha-D-mannose: step 1/2. Its function is as follows. Catalyzes the conversion of GDP-D-mannose to GDP-4-dehydro-6-deoxy-D-mannose. This chain is GDP-mannose 4,6 dehydratase 2 (gmd-2), found in Caenorhabditis elegans.